The following is a 134-amino-acid chain: Arsenate reductase (134 aa).

Active-site nucleophile residues include C11, C83, and C90. 2 disulfides stabilise this stretch: C11-C83 and C83-C90.

It belongs to the low molecular weight phosphotyrosine protein phosphatase family. Thioredoxin-coupled ArsC subfamily.

Its subcellular location is the cytoplasm. It catalyses the reaction arsenate + [thioredoxin]-dithiol + H(+) = arsenite + [thioredoxin]-disulfide + H2O. Its function is as follows. Catalyzes the reduction of arsenate [As(V)] to arsenite [As(III)]. This chain is Arsenate reductase, found in Bacillus anthracis (strain A0248).